Here is a 282-residue protein sequence, read N- to C-terminus: Shikimate dehydrogenase (NADP(+)) (282 aa).

Shikimate contacts are provided by residues 15 to 17 and T62; that span reads SKS. The Proton acceptor role is filled by K66. Shikimate is bound by residues N87 and D103. NADP(+) contacts are provided by residues 127 to 131, 151 to 156, and M220; these read GAGGA and NRTHTK. Y222 contributes to the shikimate binding site. Position 244 (G244) interacts with NADP(+).

The protein belongs to the shikimate dehydrogenase family. In terms of assembly, homodimer.

The catalysed reaction is shikimate + NADP(+) = 3-dehydroshikimate + NADPH + H(+). It participates in metabolic intermediate biosynthesis; chorismate biosynthesis; chorismate from D-erythrose 4-phosphate and phosphoenolpyruvate: step 4/7. Involved in the biosynthesis of the chorismate, which leads to the biosynthesis of aromatic amino acids. Catalyzes the reversible NADPH linked reduction of 3-dehydroshikimate (DHSA) to yield shikimate (SA). This chain is Shikimate dehydrogenase (NADP(+)), found in Shewanella baltica (strain OS195).